A 1233-amino-acid polypeptide reads, in one-letter code: uncharacterized protein (1233 aa).

3 disordered regions span residues 32-51, 510-529, and 882-915; these read SETS…TPKP, ATTN…PVPD, and EVIE…IERS. Composition is skewed to acidic residues over residues 513–529 and 882–905; these read NEEE…PVPD and EVIE…EDEG. Residues 906-915 show a composition bias toward basic and acidic residues; that stretch reads DNKQRVIERS.

This is an uncharacterized protein from Dictyostelium discoideum (Social amoeba).